The sequence spans 298 residues: Octopine catabolism/uptake operon regulatory protein OccR (298 aa).

The HTH lysR-type domain maps to methionine 1–threonine 58. The H-T-H motif DNA-binding region spans methionine 18 to lysine 37.

It belongs to the LysR transcriptional regulatory family.

In terms of biological role, positive regulatory protein for the occ operon involved in octopine catabolism and uptake. Also acts as a negative regulator of its expression. This Agrobacterium tumefaciens (strain Ach5) protein is Octopine catabolism/uptake operon regulatory protein OccR (occR).